A 323-amino-acid chain; its full sequence is Transposase for insertion sequence element IS6120 (323 aa).

The interval 300–323 (ERPTDITPPTSPSDGGQHAGTEVA) is disordered. Positions 304–313 (DITPPTSPSD) are enriched in low complexity.

It belongs to the transposase mutator family.

Functionally, required for the transposition of the insertion element. This Mycolicibacterium smegmatis (Mycobacterium smegmatis) protein is Transposase for insertion sequence element IS6120.